A 133-amino-acid polypeptide reads, in one-letter code: Transcription antitermination protein NusB (133 aa).

It belongs to the NusB family.

Its function is as follows. Involved in transcription antitermination. Required for transcription of ribosomal RNA (rRNA) genes. Binds specifically to the boxA antiterminator sequence of the ribosomal RNA (rrn) operons. This chain is Transcription antitermination protein NusB, found in Clostridium novyi (strain NT).